The following is a 596-amino-acid chain: RNA-binding protein involved in heterochromatin assembly dri1 (596 aa).

Ser176 is subject to Phosphoserine. The 79-residue stretch at 236–314 (KIVHVAGLTN…RMLEIIPSST (79 aa)) folds into the RRM domain. The RanBP2-type 1 zinc-finger motif lies at 335–364 (RPGDWNCPMCGFSNFQRRTSCFRCSFPGPT). Ser429 is subject to Phosphoserine. 2 consecutive RanBP2-type zinc fingers follow at residues 437–468 (RAGD…SRAT) and 552–580 (DQGD…PHYS).

In terms of assembly, interacts with dpb4. Interacts with chp1.

It localises to the chromosome. The protein localises to the nucleus. Its subcellular location is the cytoplasm. The protein resides in the cytoplasmic granule. In terms of biological role, mediates heterochromatin assembly by promoting RNAi-mediated heterochromatin silencing and histone deacetylation. Binds pericetromeric transcripts and recruits the RNA-induced transcriptional silencing (RITS) complex to heterochromatin. Recruits sir2 to chromatin to promote deacetylation of 'Lys-9' of histone H3. Involved in bipolar spindle assembly during mitosis. Required for proper localization of kinesin-14/Klp2 on the spindle microtubules. The polypeptide is RNA-binding protein involved in heterochromatin assembly dri1 (Schizosaccharomyces pombe (strain 972 / ATCC 24843) (Fission yeast)).